Here is a 1221-residue protein sequence, read N- to C-terminus: DNA topoisomerase 2 (1221 aa).

Residues N65, N94, 122–124 (SSN), 135–142 (GRHGYGAK), and 352–354 (QNK) each bind ATP. The Toprim domain occupies 432–546 (RTLIVTEGDS…SLLVRNPGFI (115 aa)). Residues E438, D515, and D517 each contribute to the Mg(2+) site. In terms of domain architecture, Topo IIA-type catalytic spans 681–1097 (LAHSVDGLKP…TPVQLWLGEL (417 aa)). Catalysis depends on Y771, which acts as the O-(5'-phospho-DNA)-tyrosine intermediate. Residues 952–961 (GLTQRIHING) form an interaction with DNA region. A disordered region spans residues 1158-1198 (VPPPTKRGAGGRSDGDGGATAAGAAAAVGGRGEKKGPGRAG). The span at 1165–1177 (GAGGRSDGDGGAT) shows a compositional bias: gly residues.

It belongs to the type II topoisomerase family. As to quaternary structure, homodimer. It depends on Mg(2+) as a cofactor. Requires Mn(2+) as cofactor. Ca(2+) serves as cofactor.

Its subcellular location is the nucleus. It carries out the reaction ATP-dependent breakage, passage and rejoining of double-stranded DNA.. Functionally, control of topological states of DNA by transient breakage and subsequent rejoining of DNA strands. Topoisomerase II makes double-strand breaks. This Trypanosoma brucei brucei protein is DNA topoisomerase 2 (TOP2).